Here is a 252-residue protein sequence, read N- to C-terminus: tRNA (guanine-N(1)-)-methyltransferase (252 aa).

S-adenosyl-L-methionine contacts are provided by residues Gly-113 and 133 to 138 (IGDYVL).

It belongs to the RNA methyltransferase TrmD family. In terms of assembly, homodimer.

The protein localises to the cytoplasm. It catalyses the reaction guanosine(37) in tRNA + S-adenosyl-L-methionine = N(1)-methylguanosine(37) in tRNA + S-adenosyl-L-homocysteine + H(+). Functionally, specifically methylates guanosine-37 in various tRNAs. The sequence is that of tRNA (guanine-N(1)-)-methyltransferase from Xanthomonas campestris pv. campestris (strain B100).